Here is a 260-residue protein sequence, read N- to C-terminus: UPF0246 protein APP7_0648 (260 aa).

This sequence belongs to the UPF0246 family.

This is UPF0246 protein APP7_0648 from Actinobacillus pleuropneumoniae serotype 7 (strain AP76).